The primary structure comprises 55 residues: Large ribosomal subunit protein bL33 (55 aa).

The protein belongs to the bacterial ribosomal protein bL33 family.

The sequence is that of Large ribosomal subunit protein bL33 from Gluconacetobacter diazotrophicus (strain ATCC 49037 / DSM 5601 / CCUG 37298 / CIP 103539 / LMG 7603 / PAl5).